The chain runs to 752 residues: Polyribonucleotide nucleotidyltransferase (752 aa).

Aspartate 529 and aspartate 535 together coordinate Mg(2+). The KH domain maps to 595–654; it reads PRVTTIKVPVDKIGEVIGPKGKVINAITEETGAQISIEDDGTVFVGATDGPSAQAAIDKI. The 70-residue stretch at 666 to 735 folds into the S1 motif domain; that stretch reads GERFLGTVVK…KRGKISLILV (70 aa).

It belongs to the polyribonucleotide nucleotidyltransferase family. Mg(2+) serves as cofactor.

The protein localises to the cytoplasm. The enzyme catalyses RNA(n+1) + phosphate = RNA(n) + a ribonucleoside 5'-diphosphate. Involved in mRNA degradation. Catalyzes the phosphorolysis of single-stranded polyribonucleotides processively in the 3'- to 5'-direction. The chain is Polyribonucleotide nucleotidyltransferase from Mycobacterium tuberculosis (strain ATCC 25177 / H37Ra).